The primary structure comprises 305 residues: MLTTSSSRGQRPFGARVKAFVALTKPRIIELLLITTVPVMFLAEQGVPSLRLVLLTCLGGYLSAGGANALNMYIDRDIDALMERTSQRPLVTGMVSPRECLAFGITLAVVSTLLFGLTVNWLSAWLSLGALLFYVVVYTMILKRRTSQNIVWGGIAGCLPVLIGWSSVTDSMSWAPVILFLVMFFWTPPHYWPLSMKVKDDYARVGVPMLPVVASNKVVARQIVIYSWVMVGVSLLLTPLGYTGWFYTLVALLAGGFWLWEAHGLQNRAKAEVTGGKLKEMRLFHWSITYVSILFVAVAVDPFLR.

Helical transmembrane passes span 28–48, 52–72, 101–121, 122–142, 149–169, 174–194, 218–238, 240–260, and 283–303; these read IIELLLITTVPVMFLAEQGVP, LVLLTCLGGYLSAGGANALNM, LAFGITLAVVSTLLFGLTVNW, LSAWLSLGALLFYVVVYTMIL, NIVWGGIAGCLPVLIGWSSVT, WAPVILFLVMFFWTPPHYWPL, VVARQIVIYSWVMVGVSLLLT, LGYTGWFYTLVALLAGGFWLW, and LFHWSITYVSILFVAVAVDPF.

This sequence belongs to the UbiA prenyltransferase family. Protoheme IX farnesyltransferase subfamily.

Its subcellular location is the cell membrane. It catalyses the reaction heme b + (2E,6E)-farnesyl diphosphate + H2O = Fe(II)-heme o + diphosphate. The protein operates within porphyrin-containing compound metabolism; heme O biosynthesis; heme O from protoheme: step 1/1. Its function is as follows. Converts heme B (protoheme IX) to heme O by substitution of the vinyl group on carbon 2 of heme B porphyrin ring with a hydroxyethyl farnesyl side group. This Streptomyces avermitilis (strain ATCC 31267 / DSM 46492 / JCM 5070 / NBRC 14893 / NCIMB 12804 / NRRL 8165 / MA-4680) protein is Protoheme IX farnesyltransferase.